A 117-amino-acid polypeptide reads, in one-letter code: Con-Ins T3 (117 aa).

Positions 1 to 24 (MTTSFYFLLMALGLLLYVCQSSFG) are cleaved as a signal peptide. The propeptide occupies 25 to 29 (NQHTR). The residue at position 34 (Pro34) is a 4-hydroxyproline; partial. 3 cysteine pairs are disulfide-bonded: Cys38–Cys101, Cys50–Cys114, and Cys100–Cys105. Positions 53–94 (KRNDAGKKRGQASPLWQRGGSLSMLKARAKRNEAFHLQRAHR) are cleaved as a propeptide — c peptide. Glu98 is subject to 4-carboxyglutamate. Glu109 bears the 4-carboxyglutamate; partial mark. Cys114 is subject to Cysteine amide. A propeptide spanning residues 116 to 117 (NS) is cleaved from the precursor.

Belongs to the insulin family. In terms of assembly, heterodimer of A and B chains; disulfide-linked. As to expression, expressed by the venom gland.

The protein resides in the secreted. Its function is as follows. This venom insulin facilitates prey capture by rapidly inducing hypoglycemic shock. It is one of the smallest known insulin found in nature and lacks the C-terminal segment of the B chain that, in human insulin, mediates engagement of the insulin receptor (INSR) and assembly of the hormone's hexameric storage form. Despite lacking this segment, it both binds and activates human insulin receptor (long isoform (HIR-B) OF INSR) with only a 10-fold lower potency. In vivo, intraperitoneal injection of this peptide into zebrafish lowers blood glucose with the same potency than human insulin. In addition, when applied to water, this peptide reduces overall locomotor activity of zebrafish larvae, observed as a significant decrease in the percentage of time spent swimming and movement frequency. This Conus tulipa (Fish-hunting cone snail) protein is Con-Ins T3.